Reading from the N-terminus, the 266-residue chain is Trehalose-6-phosphate phosphatase (266 aa).

The active-site Nucleophile is the Asp20. Asp20, Asp22, and Asp198 together coordinate Mg(2+). Substrate is bound at residue 20-22; the sequence is DLD.

This sequence belongs to the trehalose phosphatase family. It depends on Mg(2+) as a cofactor. Mn(2+) is required as a cofactor. The cofactor is Co(2+). Requires Zn(2+) as cofactor.

It catalyses the reaction alpha,alpha-trehalose 6-phosphate + H2O = alpha,alpha-trehalose + phosphate. It participates in glycan biosynthesis; trehalose biosynthesis. Functionally, removes the phosphate from trehalose 6-phosphate (Tre6P) to produce free trehalose. Also catalyzes the dephosphorylation of glucose-6-phosphate (Glu6P) and 2-deoxyglucose-6-phosphate (2dGlu6P). This chain is Trehalose-6-phosphate phosphatase (otsB), found in Escherichia coli (strain K12).